The primary structure comprises 172 residues: Counting factor-associated protein B (172 aa).

The N-terminal stretch at 1–21 is a signal peptide; it reads MKLLNSLILLVLTCLVSSINT. Residues N37 and N153 are each glycosylated (N-linked (GlcNAc...) asparagine).

The protein localises to the secreted. The sequence is that of Counting factor-associated protein B (cfaB) from Dictyostelium discoideum (Social amoeba).